The primary structure comprises 659 residues: Cytochrome bo(3) ubiquinol oxidase subunit 1 (659 aa).

Topologically, residues 1 to 14 are extracellular; the sequence is MFGKLTLKAIPVDE. A helical transmembrane segment spans residues 15-35; the sequence is PIIMVTYISIILIALFISFSI. The Cytoplasmic segment spans residues 36–58; sequence TYFKKWKYLWYEWFTTVDHKKIS. Residues 59 to 79 form a helical membrane-spanning segment; it reads IMYGILAFIMLFRGFVDAILM. Residues Arg-71, Asp-75, and His-98 each contribute to the a ubiquinone site. The Extracellular portion of the chain corresponds to 80–106; that stretch reads RTQQVIASSGNTGFLPPHHYDQIFTAH. Position 106 (His-106) interacts with heme b. A helical transmembrane segment spans residues 107–127; sequence GVIMIFFVAMPLVIGLMNLVV. The Cytoplasmic segment spans residues 128 to 145; it reads PLQIGARDVAFPFLNNLS. A helical membrane pass occupies residues 146–166; it reads FWLNVSGAILLTLSLGIGEFA. At 167–189 the chain is on the extracellular side; it reads QTGWLAYPPLSEVKYSPGVGVDY. Trp-170 contributes to the heme b binding site. The chain crosses the membrane as a helical span at residues 190–210; the sequence is WIWSLQISGVGTTLTGINFLI. The Cytoplasmic segment spans residues 211-225; the sequence is TILKMRAPGMCFFKM. A helical transmembrane segment spans residues 226–246; that stretch reads PVFTWAALCTNILIVISFPVL. At 247-277 the chain is on the extracellular side; the sequence is TTTLLLLTLDRCFDFHFFTNNFGGNPMMYVN. The helical transmembrane segment at 278–298 threads the bilayer; the sequence is LIWIWGHPEVYILVLPVFGVF. His-284 contacts Cu(2+). The 1'-histidyl-3'-tyrosine (His-Tyr) cross-link spans 284–288; sequence HPEVY. Fe(II)-heme o is bound at residue Tyr-288. The Cytoplasmic segment spans residues 299–309; it reads SEVVATFSKKR. The chain crosses the membrane as a helical span at residues 310–330; it reads LFGYVSLVWATLAITILSFIV. Residues 331–347 lie on the Extracellular side of the membrane; that stretch reads WLHHFFTMGAGSNVNAF. Cu(2+) is bound by residues His-333 and His-334. The helical transmembrane segment at 348-368 threads the bilayer; it reads FGITTMIIAIPTGVKIFNWLF. Topologically, residues 369–380 are cytoplasmic; that stretch reads TMYQGRVHMHSS. Residues 381-401 traverse the membrane as a helical segment; sequence MLWTIGFLITFSIGGMTGVLL. At 402–413 the chain is on the extracellular side; the sequence is SIPPADFILHNS. 2 residues coordinate Fe(II)-heme o: His-411 and His-419. The chain crosses the membrane as a helical span at residues 414–434; the sequence is LFLVAHFHNVIIGGVVFGCFA. Heme b is bound at residue His-421. Residues 435–456 lie on the Cytoplasmic side of the membrane; the sequence is GINYWFPKLFGFILNELWGKRA. A helical transmembrane segment spans residues 457 to 477; sequence FWFWIIGFFTAFMPLYFLGFM. Over 478 to 490 the chain is Extracellular; sequence GMTRRLSQNIDIE. Heme b is bound by residues Arg-481 and Arg-482. A helical transmembrane segment spans residues 491–511; that stretch reads FHFLLSIAAIGAILIGIGILC. Residues 512–580 are Cytoplasmic-facing; that stretch reads QIIQFWVSVR…KNQVQKKQYS (69 aa). The helical transmembrane segment at 581 to 601 threads the bilayer; the sequence is AIHMPKNTGLGIFISFFSLLF. Topologically, residues 602–605 are extracellular; sequence GFSA. The chain crosses the membrane as a helical span at residues 606–626; sequence VWNIIWLSFLSFLVVIISLIF. The Cytoplasmic portion of the chain corresponds to 627–659; the sequence is KSIDENTEYTVSVKEIESIENRHLENVQKAGLK.

It belongs to the heme-copper respiratory oxidase family. In terms of assembly, the cytochrome bo(3) ubiquinol oxidase complex is a heterooctamer of two A chains, two B chains, two C chains and two D chains. The cofactor is Cu(2+). Requires heme b as cofactor. Fe(II)-heme o serves as cofactor.

Its subcellular location is the cell membrane. The catalysed reaction is 2 a ubiquinol + O2 + n H(+)(in) = 2 a ubiquinone + 2 H2O + n H(+)(out). In terms of biological role, cytochrome bo(3) ubiquinol oxidase is the terminal enzyme in the aerobic respiratory chain. Catalyzes the four-electron reduction of O2 to water, using a ubiquinol as a membrane soluble electron donor for molecular oxygen reduction. Has proton pump activity across the membrane in addition to electron transfer, pumping 2 protons/electron and generating a proton motive force. All the redox centers of this enzyme complex are located within the largest subunit, subunit I. Protons are probably pumped via D- and K- channels found in this subunit. The sequence is that of Cytochrome bo(3) ubiquinol oxidase subunit 1 (cyoB) from Buchnera aphidicola subsp. Schizaphis graminum (strain Sg).